A 177-amino-acid chain; its full sequence is TRAF-interacting protein with FHA domain-containing protein A (177 aa).

The FHA domain occupies 48-104 (VAFGRDYNVCRYPLLSNRVSRIQFNLQFFKHFNCSTTAIEIKNLSKKNKLYVDNLEL).

Belongs to the TIFA family. In terms of assembly, interacts with traf6.

It localises to the cytoplasm. Its function is as follows. Adapter molecule that plays a key role in the activation of pro-inflammatory NF-kappa-B signaling following detection of bacterial pathogen-associated molecular pattern metabolites (PAMPs). Promotes activation of an innate immune response by inducing the oligomerization and polyubiquitination of TRAF6, which leads to the activation of TAK1 and IKK through a proteasome-independent mechanism. This chain is TRAF-interacting protein with FHA domain-containing protein A, found in Xenopus tropicalis (Western clawed frog).